The sequence spans 146 residues: 3-dehydroquinate dehydratase (146 aa).

Catalysis depends on Y23, which acts as the Proton acceptor. N74, H80, and D87 together coordinate substrate. The Proton donor role is filled by H100. Substrate is bound by residues 101–102 and R111; that span reads IS.

It belongs to the type-II 3-dehydroquinase family. As to quaternary structure, homododecamer.

It catalyses the reaction 3-dehydroquinate = 3-dehydroshikimate + H2O. The protein operates within metabolic intermediate biosynthesis; chorismate biosynthesis; chorismate from D-erythrose 4-phosphate and phosphoenolpyruvate: step 3/7. In terms of biological role, catalyzes a trans-dehydration via an enolate intermediate. The sequence is that of 3-dehydroquinate dehydratase from Bacillus cereus (strain ATCC 10987 / NRS 248).